We begin with the raw amino-acid sequence, 117 residues long: uncharacterized protein (117 aa).

The protein to H.influenzae HI_1162 and to HI_0925.

This is an uncharacterized protein from Escherichia coli (strain K12).